Reading from the N-terminus, the 203-residue chain is Proteasome subunit beta 2 (203 aa).

Positions 1-9 (MGEEVQIGA) are cleaved as a propeptide — removed in mature form; by autocatalysis. Thr-10 serves as the catalytic Nucleophile.

This sequence belongs to the peptidase T1B family. The 20S proteasome core is composed of 14 alpha and 14 beta subunits that assemble into four stacked heptameric rings, resulting in a barrel-shaped structure. The two inner rings, each composed of seven catalytic beta subunits, are sandwiched by two outer rings, each composed of seven alpha subunits. The catalytic chamber with the active sites is on the inside of the barrel. Has a gated structure, the ends of the cylinder being occluded by the N-termini of the alpha-subunits. Is capped at one or both ends by the proteasome regulatory ATPase, PAN.

The protein localises to the cytoplasm. It catalyses the reaction Cleavage of peptide bonds with very broad specificity.. With respect to regulation, the formation of the proteasomal ATPase PAN-20S proteasome complex, via the docking of the C-termini of PAN into the intersubunit pockets in the alpha-rings, triggers opening of the gate for substrate entry. Interconversion between the open-gate and close-gate conformations leads to a dynamic regulation of the 20S proteasome proteolysis activity. Component of the proteasome core, a large protease complex with broad specificity involved in protein degradation. The sequence is that of Proteasome subunit beta 2 from Pyrobaculum aerophilum (strain ATCC 51768 / DSM 7523 / JCM 9630 / CIP 104966 / NBRC 100827 / IM2).